Consider the following 145-residue polypeptide: Acidic phospholipase A2 S1-11 (145 aa).

The first 19 residues, M1–A19, serve as a signal peptide directing secretion. Residues S20–L27 constitute a propeptide that is removed on maturation. Intrachain disulfides connect C38/C99, C54/C144, C56/C72, C71/C127, and C106/C118. Positions 55, 57, and 59 each coordinate Ca(2+). Residue H75 is part of the active site. D76 contacts Ca(2+). The active site involves D121.

The protein belongs to the phospholipase A2 family. Group I subfamily. D49 sub-subfamily. The cofactor is Ca(2+). In terms of processing, this enzyme lacks two of the seven disulfide bonds found in similar PLA2 proteins. In terms of tissue distribution, expressed by the venom gland.

The protein resides in the secreted. The enzyme catalyses a 1,2-diacyl-sn-glycero-3-phosphocholine + H2O = a 1-acyl-sn-glycero-3-phosphocholine + a fatty acid + H(+). In terms of biological role, snake venom phospholipase A2 (PLA2) that inhibits collagen-induced platelet aggregation. PLA2 catalyzes the calcium-dependent hydrolysis of the 2-acyl groups in 3-sn-phosphoglycerides. The polypeptide is Acidic phospholipase A2 S1-11 (Austrelaps superbus (Lowland copperhead snake)).